A 464-amino-acid chain; its full sequence is Protein FAM90A1 (464 aa).

Disordered stretches follow at residues 1 to 43, 71 to 294, 312 to 386, 412 to 437, and 445 to 464; these read MMAR…PRLK, PNFG…KRSA, PFQI…AASH, PSFH…SEGP, and VLYE…SDLE. Composition is skewed to basic and acidic residues over residues 74 to 83 and 97 to 114; these read GEKEGKENLK and NKDK…DPQR. A compositionally biased stretch (low complexity) spans 180–197; sequence LASLSPLRKASLSSSSSL. A compositionally biased stretch (polar residues) spans 344–355; sequence TSPQTGTRTPAQ.

This sequence belongs to the FAM90 family.

This Homo sapiens (Human) protein is Protein FAM90A1 (FAM90A1).